The primary structure comprises 1061 residues: Chimeric ERCC6-PGBD3 protein (1061 aa).

The segment at 1–39 (MPNEGIPHSSQTQEQDCLQSQPVSNNEEMAIKQESGGDG) is disordered. Residues 8-27 (HSSQTQEQDCLQSQPVSNNE) show a composition bias toward polar residues. Ser158 is subject to Phosphoserine. Lys255 participates in a covalent cross-link: Glycyl lysine isopeptide (Lys-Gly) (interchain with G-Cter in SUMO2). Disordered regions lie at residues 287-323 (KQGC…VLSK), 344-466 (GKVG…QRLS), 494-521 (VIQP…INNL), and 537-573 (SDAE…SRRR). The segment covering 353-363 (RPWESDMRPEA) has biased composition (basic and acidic residues). Over residues 364-392 (EGDSEGEESEYFPTEEEEEEEDDEVEGAE) the composition is skewed to acidic residues. Ser429 and Ser430 each carry phosphoserine. The segment covering 451 to 462 (RYRDDGDEDYYK) has biased composition (basic and acidic residues). Residues 506–515 (SDEESGDEEG) are compositionally biased toward acidic residues. A Phosphoserine modification is found at Ser554.

As to expression, expressed in heart and oocytes, but not in granulosa cells (at protein level).

It localises to the nucleus. In terms of biological role, involved in repair of DNA damage following UV irradiation, acting either in the absence of ERCC6 or synergistically with ERCC6. Involved in the regulation of gene expression. In the absence of ERCC6, induces the expression of genes characteristic of interferon-like antiviral responses. This response is almost completely suppressed in the presence of ERCC6. In the presence of ERCC6, regulates the expression of genes involved in metabolism regulation, including IGFBP5 and IGFBP7. In vitro binds to PGBD3-related transposable elements, called MER85s; these non-autonomous 140 bp elements are characterized by the presence of PGBD3 terminal inverted repeats and the absence of internal transposase ORF. The protein is Chimeric ERCC6-PGBD3 protein of Homo sapiens (Human).